A 555-amino-acid polypeptide reads, in one-letter code: uncharacterized protein (555 aa).

5 consecutive transmembrane segments (helical) span residues 13-30 (ALQA…GLGL), 35-57 (FWGV…HFGL), 72-91 (LVIF…FSSF), 98-120 (LNML…SYAT), and 157-179 (TPAL…AVLL). RCK C-terminal domains are found at residues 188–273 (EDLE…LFGE) and 282–366 (KEDI…VLGN). Helical transmembrane passes span 376–398 (LVVI…SIPG), 408–430 (AGGP…MITY), 437–459 (LMLR…GAHF), 469–491 (LLWI…FVAF), 498–517 (FGSV…ALNY), and 532–554 (ATVY…MFLL).

The protein belongs to the AAE transporter (TC 2.A.81) family.

The protein localises to the cell membrane. This is an uncharacterized protein from Bacteroides thetaiotaomicron (strain ATCC 29148 / DSM 2079 / JCM 5827 / CCUG 10774 / NCTC 10582 / VPI-5482 / E50).